The sequence spans 33 residues: Brevinin-2DYc (33 aa).

A disulfide bond links cysteine 27 and cysteine 33.

As to expression, expressed by the skin glands.

Its subcellular location is the secreted. Its function is as follows. Antimicrobial peptide. A mixture of Brevinin-2DYc/2DYd is active against the Gram-positive bacterium S.aureus (MIC=15 uM) and the Gram-negative bacterium E.coli (MIC=15 uM). The polypeptide is Brevinin-2DYc (Rana dybowskii (Dybovsky's frog)).